Consider the following 399-residue polypeptide: MTKKRHLFTSESVTEGHPDKICDQISDSILDAILSKDANARVACETTVTTGLVLVAGEITTSTYVDIPKIVRETIQGIGYTRAKYGFDAETCAVLTSIDEQSADIAMGVDQALEAREGQMTDAEIEAIGAGDQGLMFGFACNETQELMPLPISLAHKLARRLTEVRKDDTLSYLRPDGKTQVTVEYDENGKPVRVDTIVISTQHHPDVTWEEIDRDLKEHVIKAVVPAELMDGETKFFINPTGRFVIGGPQGDAGLTGRKIIVDTYGGYARHGGGAFSGKDATKVDRSAAYAARYVAKNIVAAGLAEKAEVQLAYAIGVAQPVSISVDTFGTGKVSEDVLVELVRNNFDLRPAGIIKMLDLRRPIYKQTAAYGHFGRTDVDLSWERTDKAAALKEQAGL.

Residue H17 participates in ATP binding. Position 19 (D19) interacts with Mg(2+). E45 serves as a coordination point for K(+). Residues E58 and Q101 each coordinate L-methionine. The segment at 101–111 is flexible loop; that stretch reads QSADIAMGVDQ. ATP contacts are provided by residues 177-179, 244-245, D253, 259-260, A276, and K280; these read DGK, RF, and RK. D253 provides a ligand contact to L-methionine. L-methionine is bound at residue K284.

Belongs to the AdoMet synthase family. As to quaternary structure, homotetramer; dimer of dimers. Mg(2+) serves as cofactor. K(+) is required as a cofactor.

It localises to the cytoplasm. The enzyme catalyses L-methionine + ATP + H2O = S-adenosyl-L-methionine + phosphate + diphosphate. Its pathway is amino-acid biosynthesis; S-adenosyl-L-methionine biosynthesis; S-adenosyl-L-methionine from L-methionine: step 1/1. Catalyzes the formation of S-adenosylmethionine (AdoMet) from methionine and ATP. The overall synthetic reaction is composed of two sequential steps, AdoMet formation and the subsequent tripolyphosphate hydrolysis which occurs prior to release of AdoMet from the enzyme. The protein is S-adenosylmethionine synthase of Bacillus cereus (strain B4264).